We begin with the raw amino-acid sequence, 653 residues long: Acetyl-coenzyme A synthetase 1 (653 aa).

CoA-binding positions include 191 to 194, Thr-311, and Asn-335; that span reads RGGR. ATP contacts are provided by residues 387 to 389, 411 to 416, Asp-500, and Arg-515; these read GEP and DTWWQT. Ser-523 contributes to the CoA binding site. Arg-526 contacts ATP. Mg(2+)-binding residues include Val-537, His-539, and Val-542. Arg-584 lines the CoA pocket. Lys-609 carries the N6-acetyllysine modification.

This sequence belongs to the ATP-dependent AMP-binding enzyme family. Requires Mg(2+) as cofactor. Acetylated. Deacetylation by the SIR2-homolog deacetylase activates the enzyme.

It carries out the reaction acetate + ATP + CoA = acetyl-CoA + AMP + diphosphate. Functionally, catalyzes the conversion of acetate into acetyl-CoA (AcCoA), an essential intermediate at the junction of anabolic and catabolic pathways. AcsA undergoes a two-step reaction. In the first half reaction, AcsA combines acetate with ATP to form acetyl-adenylate (AcAMP) intermediate. In the second half reaction, it can then transfer the acetyl group from AcAMP to the sulfhydryl group of CoA, forming the product AcCoA. The polypeptide is Acetyl-coenzyme A synthetase 1 (Pseudomonas putida (strain ATCC 47054 / DSM 6125 / CFBP 8728 / NCIMB 11950 / KT2440)).